Reading from the N-terminus, the 1017-residue chain is Probable calcium-transporting ATPase 8, plasma membrane-type (1017 aa).

Residues 1–153 (MEKLDRYLQE…FVWDAFQDMT (153 aa)) lie on the Cytoplasmic side of the membrane. 2 consecutive transmembrane segments (helical) span residues 154 to 174 (LIILMVCALLSVAVGLATEGW) and 177 to 197 (GMYDGLGIILSIFLVVMVTAV). Residues 198 to 228 (SDYKQSLQFKELDNEKKKIFIHVTRDGRRQK) are Cytoplasmic-facing. A run of 2 helical transmembrane segments spans residues 229-249 (ISIYDLVVGDIVHLSIGDQVP) and 331-351 (VATVIGKIGLVFAILTFLVLL). The Cytoplasmic segment spans residues 352–384 (VRFLIDKGMTVGLLKWYSTDALTIVNYFATAVT). A helical membrane pass occupies residues 385–405 (IIVVAVPEGLPLAVTLSLAFA). The active-site 4-aspartylphosphate intermediate is the Asp-434. Residues Asp-736 and Asp-740 each contribute to the Mg(2+) site. Residues 803-823 (IVALVINFVSACITGSAPLTA) form a helical membrane-spanning segment. At 824–825 (VQ) the chain is on the cytoplasmic side. The next 2 helical transmembrane spans lie at 826–846 (LLWVNMIMDTLGALALATEPP) and 875–895 (SLYQLFVLGALMFGGESLLNI). Topologically, residues 896–938 (KGADSKSIINTLIFNSFVFCQVFNEINSREMQKINVFRGIISN) are cytoplasmic. The next 2 helical transmembrane spans lie at 939 to 959 (WIFIAVIAATVAFQVVIIEFL) and 973 to 993 (WLLSVGLGSISLIVGVILKCI). Topologically, residues 994–1017 (PVGSGETSATPNGYRPLANGPDDI) are cytoplasmic.

Belongs to the cation transport ATPase (P-type) (TC 3.A.3) family. Type IIB subfamily.

It is found in the membrane. It catalyses the reaction Ca(2+)(in) + ATP + H2O = Ca(2+)(out) + ADP + phosphate + H(+). Activated by calmodulin. In terms of biological role, this magnesium-dependent enzyme catalyzes the hydrolysis of ATP coupled with the translocation of calcium from the cytosol out of the cell, into the endoplasmic reticulum, or into organelles. This chain is Probable calcium-transporting ATPase 8, plasma membrane-type, found in Oryza sativa subsp. japonica (Rice).